The following is a 648-amino-acid chain: Rab11 family-interacting protein 1 (648 aa).

In terms of domain architecture, C2 spans 1–129; sequence MSLAASAGRG…DQSRRKKQWY (129 aa). Residues 164–188 show a composition bias toward basic and acidic residues; the sequence is SMKDKSRNPFGKLKDKIKGKNKDNT. 3 disordered regions span residues 164–470, 483–503, and 516–555; these read SMKD…GRKG, VRRP…SQNP, and VESK…PKIT. A compositionally biased stretch (polar residues) spans 189–201; that stretch reads SDTASAIVPSTTP. Phosphoserine occurs at positions 205, 209, and 237. Polar residues-rich tracts occupy residues 227–242 and 271–296; these read PSLQ…SVLP and SSAS…SNFS. Residues S304, S319, S343, S345, S347, S349, S360, S361, and S386 each carry the phosphoserine modification. Over residues 314–323 the composition is skewed to polar residues; that stretch reads DSLSRSNVCI. Basic and acidic residues-rich tracts occupy residues 381-394 and 422-436; these read SDRR…KDSM and ATKE…ESKK. S438 bears the Phosphoserine mark. Residues 445-454 show a composition bias toward basic and acidic residues; it reads GKKDVAKGSE. Residues 576 to 638 enclose the FIP-RBD domain; that stretch reads KKYQPSDPAF…EETPNILRVP (63 aa). The interval 584 to 648 is necessary for interaction with RAB4A and RAB11A, subcellular location and endosomal recycling; it reads AFAYAQLTHD…AQTGKKAGKM (65 aa).

Homooligomer. Interacts with RAB11A, RAB11B, RAB25, RAB4A and RAB14.

It localises to the recycling endosome. The protein localises to the cytoplasmic vesicle. In terms of biological role, a Rab11 effector protein involved in the endosomal recycling process. Also involved in controlling membrane trafficking along the phagocytic pathway and in phagocytosis. Interaction with RAB14 may function in the process of neurite formation. This chain is Rab11 family-interacting protein 1, found in Rattus norvegicus (Rat).